A 163-amino-acid polypeptide reads, in one-letter code: Small ribosomal subunit protein uS9 (163 aa).

Polar residues predominate over residues Met1–Val11. The segment at Met1 to Gly40 is disordered. Residues Thr18–Gly27 are compositionally biased toward low complexity.

Belongs to the universal ribosomal protein uS9 family.

This is Small ribosomal subunit protein uS9 from Bifidobacterium longum (strain DJO10A).